Consider the following 126-residue polypeptide: Protein ApaG (126 aa).

The region spanning 2–126 (SDTQHQVNVR…FRLAVPGALH (125 aa)) is the ApaG domain.

This chain is Protein ApaG, found in Pseudomonas paraeruginosa (strain DSM 24068 / PA7) (Pseudomonas aeruginosa (strain PA7)).